We begin with the raw amino-acid sequence, 363 residues long: Peptide chain release factor 2 (363 aa).

Glutamine 251 is subject to N5-methylglutamine.

It belongs to the prokaryotic/mitochondrial release factor family. Methylated by PrmC. Methylation increases the termination efficiency of RF2.

The protein resides in the cytoplasm. Functionally, peptide chain release factor 2 directs the termination of translation in response to the peptide chain termination codons UGA and UAA. The protein is Peptide chain release factor 2 of Helicobacter pylori (strain G27).